We begin with the raw amino-acid sequence, 706 residues long: Gamma-adducin (706 aa).

Polar residues predominate over residues 1-10 (MSSDASQGVI). Positions 1–20 (MSSDASQGVITTPPPPSMPH) are disordered. Position 2 is an N-acetylserine (S2). A phosphoserine mark is found at S42, S64, S402, S414, S423, S442, and S461. Disordered stretches follow at residues 471–497 (AEDSSKVSGGTPIKIEDPNQFVPLNTN), 535–555 (PSTMQFEDDDHGPPAPPNPFS), 575–610 (GLEDAEQELLSDDASSVSQIQSQTQSPQNVPEKLEE), and 666–706 (EKIE…KVEA). K484 is covalently cross-linked (Glycyl lysine isopeptide (Lys-Gly) (interchain with G-Cter in SUMO2)). 7 positions are modified to phosphoserine: S585, S590, S673, S677, S679, S681, and S683. Low complexity predominate over residues 589-602 (SSVSQIQSQTQSPQ). Basic residues predominate over residues 682–706 (PSKKKKKFRTPSFLKKNKKKEKVEA). The tract at residues 684–701 (KKKKKFRTPSFLKKNKKK) is interaction with calmodulin.

It belongs to the aldolase class II family. Adducin subfamily. Heterodimer of an alpha and a gamma subunit. Post-translationally, sumoylated. Proteolytically cleaved by asparagine endopeptidase (AEP) into 2 fragments. Overexpression of the 1-357 fragment induces neuronal apoptosis, and overexpression of either 1-357 or 358-706 fragment increases the degeneration of dendritic spines. Overexpression of the 1-357 fragment impairs neurite outgrowth by downregulating the expression of Rac2, and induces synaptic dysfunction and cognitive impairments in tau P301S transgenic mice, a mouse model for Alzheimer disease (AD). In terms of tissue distribution, ubiquitously expressed. Cleavage fragment 1-357 is abundantly expressed in the brain of patients with Alzheimer disease (AD), but hardly detectable in age-matched control individuals (at protein level).

The protein resides in the cytoplasm. It localises to the cytoskeleton. Its subcellular location is the cell membrane. Membrane-cytoskeleton-associated protein that promotes the assembly of the spectrin-actin network. Plays a role in actin filament capping. Binds to calmodulin. Involved in myogenic reactivity of the renal afferent arteriole (Af-art), renal interlobular arteries and middle cerebral artery (MCA) to increased perfusion pressure. Involved in regulation of potassium channels in the vascular smooth muscle cells (VSMCs) of the Af-art and MCA ex vivo. Involved in regulation of glomerular capillary pressure, glomerular filtration rate (GFR) and glomerular nephrin expression in response to hypertension. Involved in renal blood flow (RBF) autoregulation. Plays a role in podocyte structure and function. Regulates globular monomer actin (G-actin) and filamentous polymer actin (F-actin) ratios in the primary podocytes affecting actin cytoskeleton organization. Regulates expression of synaptopodin, RhoA, Rac1 and CDC42 in the renal cortex and the primary podocytes. Regulates expression of nephrin in the glomeruli and in the primary podocytes, expression of nephrin and podocinin in the renal cortex, and expression of focal adhesion proteins integrin alpha-3 and integrin beta-1 in the glomeruli. Involved in cell migration and cell adhesion of podocytes, and in podocyte foot process effacement. Regulates expression of profibrotics markers MMP2, MMP9, TGF beta-1, tubular tight junction protein E-cadherin, and mesenchymal markers vimentin and alpha-SMA. Promotes the growth of neurites. The sequence is that of Gamma-adducin (ADD3) from Homo sapiens (Human).